We begin with the raw amino-acid sequence, 323 residues long: Viral cathepsin (323 aa).

Residues methionine 1 to serine 16 form the signal peptide. A propeptide spans alanine 17 to glycine 112 (activation peptide). Cystine bridges form between cysteine 133–cysteine 174, cysteine 167–cysteine 207, and cysteine 262–cysteine 310. Cysteine 136 is a catalytic residue. Asparagine 158 is a glycosylation site (N-linked (GlcNAc...) asparagine; by host). Catalysis depends on residues histidine 269 and asparagine 289.

It belongs to the peptidase C1 family. Post-translationally, synthesized as an inactive proenzyme and activated by proteolytic removal of the inhibitory propeptide.

It carries out the reaction Endopeptidase of broad specificity, hydrolyzing substrates of both cathepsin L and cathepsin B.. Cysteine protease that plays an essential role in host liquefaction to facilitate horizontal transmission of the virus. May participate in the degradation of foreign protein expressed by the baculovirus system. This chain is Viral cathepsin (VCATH), found in Helicoverpa zea (Corn earworm moth).